The following is a 516-amino-acid chain: Cytochrome P450 93G1 (516 aa).

A helical membrane pass occupies residues Leu-11 to Val-31. Cys-454 contacts heme.

This sequence belongs to the cytochrome P450 family. Heme serves as cofactor.

The protein resides in the membrane. The enzyme catalyses a flavanone + reduced [NADPH--hemoprotein reductase] + O2 = a flavone + oxidized [NADPH--hemoprotein reductase] + 2 H2O + H(+). It participates in secondary metabolite biosynthesis; flavonoid biosynthesis. Functions as a flavone synthase II (FNSII) that catalyzes the direct conversion of flavanones to flavones. In vitro, can convert naringenin and eriodictyol to apigenin and luteolin, respectively. Acts as a key branch point enzyme that channels flavanones to the biosynthesis of soluble tricin O-linked conjugates. This is Cytochrome P450 93G1 from Oryza sativa subsp. japonica (Rice).